The chain runs to 96 residues: MLFYSFFKTLIDTEVTVELKNDMSIRGILKSVDQFLNVKLENISVVDASKYPHMAAVKDLFIRGSVVRYVHMSSAYVDTILLADACRRDLANNKRQ.

The region spanning 2-76 (LFYSFFKTLI…VRYVHMSSAY (75 aa)) is the Sm domain.

Belongs to the snRNP Sm proteins family. Component of the heptameric LSM1-LSM7 complex that forms a seven-membered ring structure with a donut shape. The LSm subunits are arranged in the order lsm1, lsm2, lsm3, lsm6, lsm5, lsm7 and lsm4. Component of the heptameric LSM2-LSM8 complex that forms a seven-membered ring structure with a donut shape. The LSm subunits are arranged in the order lsm8, lsm2, lsm3, lsm6, lsm5, lsm7 and lsm4.

The protein resides in the nucleus. The protein localises to the cytoplasm. Functionally, component of LSm protein complexes, which are involved in RNA processing and may function in a chaperone-like manner. Component of the cytoplasmic LSM1-LSM7 complex which is involved in mRNA degradation by activating the decapping step. The LSM1-LSM7 complex loads onto the 3'-end of single stranded RNA. Component of the nuclear LSM2-LSM8 complex, which is involved in spliceosome assembly. The LSM2-LSM8 complex plays a role in the biogenesis of the spliceosomal U4/U6-U5 tri-snRNP complex by accelerating prp24-mediated annealing of U4/U6 di-snRNA. The LSM2-LSM8 complex binds U6 snRNA terminating with a cyclic 2',3' phosphate group; RNA with an unmodified 3' hydroxyl or non-cyclic 3' phosphate is bound less tightly. In Schizosaccharomyces pombe (strain 972 / ATCC 24843) (Fission yeast), this protein is LSM complex subunit lsm2 (lsm2).